A 147-amino-acid polypeptide reads, in one-letter code: Hemoglobin subunit gamma (147 aa).

A Globin domain is found at 3 to 147; the sequence is DFTAEEKAAI…VASAVARKYH (145 aa). Heme b-binding residues include H64 and H93.

It belongs to the globin family. In terms of assembly, heterotetramer of two alpha chains and two gamma chains in fetal hemoglobin (Hb F). In terms of tissue distribution, red blood cells.

Its function is as follows. Gamma chains make up the fetal hemoglobin F, in combination with alpha chains. This Trichechus manatus (Caribbean manatee) protein is Hemoglobin subunit gamma (HBG).